The primary structure comprises 619 residues: ATP-dependent zinc metalloprotease FtsH (619 aa).

The Cytoplasmic portion of the chain corresponds to 1-5 (MKYFK). The chain crosses the membrane as a helical span at residues 6-26 (GISFYIIIFILILVIITFFTA). At 27–110 (TDNPPKMSYS…VTQPPQPPWW (84 aa)) the chain is on the extracellular side. Residues 111–131 (VSMLPTVGLVIILILIWFFFI) traverse the membrane as a helical segment. Topologically, residues 132 to 619 (QQSQGGGGGN…GSSQTPQLEG (488 aa)) are cytoplasmic. ATP is bound at residue 204-211 (GPPGTGKT). A Zn(2+)-binding site is contributed by His-426. Residue Glu-427 is part of the active site. 2 residues coordinate Zn(2+): His-430 and Asp-502.

The protein in the central section; belongs to the AAA ATPase family. In the C-terminal section; belongs to the peptidase M41 family. In terms of assembly, homohexamer. Zn(2+) is required as a cofactor.

Its subcellular location is the cell membrane. Its function is as follows. Acts as a processive, ATP-dependent zinc metallopeptidase for both cytoplasmic and membrane proteins. Plays a role in the quality control of integral membrane proteins. This chain is ATP-dependent zinc metalloprotease FtsH, found in Ruminiclostridium cellulolyticum (strain ATCC 35319 / DSM 5812 / JCM 6584 / H10) (Clostridium cellulolyticum).